The chain runs to 485 residues: MTITPQHLIALLPLLIVGLTVVVVMLSIAWRRNHFLNATLSVIGLNAALVSLWFVGQAGAMDVTPLMRVDGFAMLYTGLVLLASLATCTFAYPWLEGYNDNQEEFYLLVLIASLGGILLANANHLAALFLGIELISLPLFGLIGYAFRQKRSLEASIKYTILSAAASSFLLFGMALVYAQSGNLSFEALGKSLGDGMLREPLLLAGFGLMIVGLGFKLSLVPFHLWTPDVYQGAPAPVSTFLATASKIAIFGVVMRLFLYAPVGDSEAVRVVLGIIAFASIIFGNLMALSQTNIKRLLGYSSISHLGYLLVALIALQSGEMSMEAVGVYLAGYLFSSLGAFGVVSLMSSPFRGPDADSLFSYRGLFWHRPVLAAVMTVMMLSLAGIPMTLGFIGKFYVLAVGVQASLWWLVAAVVVGSAIGLYYYLRVAVSLYLHAPQQPGRDAPINWQYSAGGIVVLISALLVLVLGVWPQPLISLVQLATPLM.

14 consecutive transmembrane segments (helical) span residues 8 to 28 (LIAL…MLSI), 35 to 55 (FLNA…LWFV), 71 to 91 (GFAM…CTFA), 105 to 125 (FYLL…ANHL), 127 to 147 (ALFL…GYAF), 159 to 179 (YTIL…LVYA), 203 to 223 (LLAG…LVPF), 235 to 255 (PAPV…GVVM), 271 to 291 (VVLG…ALSQ), 297 to 317 (LLGY…IALQ), 326 to 346 (VGVY…VVSL), 373 to 393 (AAVM…LGFI), 408 to 430 (WWLV…RVAV), and 455 to 475 (IVVL…QPLI).

The protein belongs to the complex I subunit 2 family. As to quaternary structure, NDH-1 is composed of 13 different subunits. Subunits NuoA, H, J, K, L, M, N constitute the membrane sector of the complex.

Its subcellular location is the cell inner membrane. It catalyses the reaction a quinone + NADH + 5 H(+)(in) = a quinol + NAD(+) + 4 H(+)(out). Functionally, NDH-1 shuttles electrons from NADH, via FMN and iron-sulfur (Fe-S) centers, to quinones in the respiratory chain. The immediate electron acceptor for the enzyme in this species is believed to be ubiquinone. Couples the redox reaction to proton translocation (for every two electrons transferred, four hydrogen ions are translocated across the cytoplasmic membrane), and thus conserves the redox energy in a proton gradient. This is NADH-quinone oxidoreductase subunit N from Salmonella arizonae (strain ATCC BAA-731 / CDC346-86 / RSK2980).